The chain runs to 204 residues: Holliday junction branch migration complex subunit RuvA (204 aa).

Residues 1–64 (MIGRLRGILL…EDAQLLYGFN (64 aa)) are domain I. Residues 65-143 (TVKERALFRE…GWGAGDLFTP (79 aa)) form a domain II region. The interval 144 to 155 (FTDAAPTDSAAA) is flexible linker. The segment at 156–204 (SSNSAEEEAVSALLALGYKPTQASKVVSQIAKPDMSSEQLIREALKSMV) is domain III.

It belongs to the RuvA family. In terms of assembly, homotetramer. Forms an RuvA(8)-RuvB(12)-Holliday junction (HJ) complex. HJ DNA is sandwiched between 2 RuvA tetramers; dsDNA enters through RuvA and exits via RuvB. An RuvB hexamer assembles on each DNA strand where it exits the tetramer. Each RuvB hexamer is contacted by two RuvA subunits (via domain III) on 2 adjacent RuvB subunits; this complex drives branch migration. In the full resolvosome a probable DNA-RuvA(4)-RuvB(12)-RuvC(2) complex forms which resolves the HJ.

Its subcellular location is the cytoplasm. Its function is as follows. The RuvA-RuvB-RuvC complex processes Holliday junction (HJ) DNA during genetic recombination and DNA repair, while the RuvA-RuvB complex plays an important role in the rescue of blocked DNA replication forks via replication fork reversal (RFR). RuvA specifically binds to HJ cruciform DNA, conferring on it an open structure. The RuvB hexamer acts as an ATP-dependent pump, pulling dsDNA into and through the RuvAB complex. HJ branch migration allows RuvC to scan DNA until it finds its consensus sequence, where it cleaves and resolves the cruciform DNA. The chain is Holliday junction branch migration complex subunit RuvA from Vibrio parahaemolyticus serotype O3:K6 (strain RIMD 2210633).